Here is a 481-residue protein sequence, read N- to C-terminus: Chromosomal replication initiator protein DnaA (481 aa).

Residues Met-1–Pro-74 are domain I, interacts with DnaA modulators. The interval Pro-74–Thr-144 is domain II. Residues Ala-101–Val-123 are disordered. A compositionally biased stretch (low complexity) spans Gln-111–Val-123. Residues Arg-145–Ala-361 are domain III, AAA+ region. The ATP site is built by Gly-189, Gly-191, Lys-192, and Thr-193. A domain IV, binds dsDNA region spans residues Arg-362–Gly-481.

Belongs to the DnaA family. Oligomerizes as a right-handed, spiral filament on DNA at oriC.

It is found in the cytoplasm. Functionally, plays an essential role in the initiation and regulation of chromosomal replication. ATP-DnaA binds to the origin of replication (oriC) to initiate formation of the DNA replication initiation complex once per cell cycle. Binds the DnaA box (a 9 base pair repeat at the origin) and separates the double-stranded (ds)DNA. Forms a right-handed helical filament on oriC DNA; dsDNA binds to the exterior of the filament while single-stranded (ss)DNA is stabiized in the filament's interior. The ATP-DnaA-oriC complex binds and stabilizes one strand of the AT-rich DNA unwinding element (DUE), permitting loading of DNA polymerase. After initiation quickly degrades to an ADP-DnaA complex that is not apt for DNA replication. Binds acidic phospholipids. The sequence is that of Chromosomal replication initiator protein DnaA from Aromatoleum aromaticum (strain DSM 19018 / LMG 30748 / EbN1) (Azoarcus sp. (strain EbN1)).